A 78-amino-acid polypeptide reads, in one-letter code: Large ribosomal subunit protein bL28B (78 aa).

Residues 1 to 29 (MSAHCQVTGRKPGFGNTVSHSHRRSRRRW) form a disordered region. Residues 20–29 (HSHRRSRRRW) show a composition bias toward basic residues.

This sequence belongs to the bacterial ribosomal protein bL28 family.

The chain is Large ribosomal subunit protein bL28B (rpmB2) from Mycobacterium bovis (strain ATCC BAA-935 / AF2122/97).